The following is a 62-amino-acid chain: Large ribosomal subunit protein bL32 (62 aa).

Belongs to the bacterial ribosomal protein bL32 family.

The polypeptide is Large ribosomal subunit protein bL32 (Levilactobacillus brevis (strain ATCC 367 / BCRC 12310 / CIP 105137 / JCM 1170 / LMG 11437 / NCIMB 947 / NCTC 947) (Lactobacillus brevis)).